We begin with the raw amino-acid sequence, 129 residues long: Small ribosomal subunit protein uS11 (129 aa).

This sequence belongs to the universal ribosomal protein uS11 family. As to quaternary structure, part of the 30S ribosomal subunit. Interacts with proteins S7 and S18. Binds to IF-3.

In terms of biological role, located on the platform of the 30S subunit, it bridges several disparate RNA helices of the 16S rRNA. Forms part of the Shine-Dalgarno cleft in the 70S ribosome. This chain is Small ribosomal subunit protein uS11, found in Hydrogenovibrio crunogenus (strain DSM 25203 / XCL-2) (Thiomicrospira crunogena).